Reading from the N-terminus, the 555-residue chain is Dihydroxy-acid dehydratase (555 aa).

Position 80 (Asp-80) interacts with Mg(2+). Cys-121 is a [2Fe-2S] cluster binding site. Positions 122 and 123 each coordinate Mg(2+). The residue at position 123 (Lys-123) is an N6-carboxylysine. Cys-193 contributes to the [2Fe-2S] cluster binding site. Glu-444 serves as a coordination point for Mg(2+). Ser-470 acts as the Proton acceptor in catalysis.

It belongs to the IlvD/Edd family. Homodimer. The cofactor is [2Fe-2S] cluster. Mg(2+) serves as cofactor.

The catalysed reaction is (2R)-2,3-dihydroxy-3-methylbutanoate = 3-methyl-2-oxobutanoate + H2O. The enzyme catalyses (2R,3R)-2,3-dihydroxy-3-methylpentanoate = (S)-3-methyl-2-oxopentanoate + H2O. Its pathway is amino-acid biosynthesis; L-isoleucine biosynthesis; L-isoleucine from 2-oxobutanoate: step 3/4. It functions in the pathway amino-acid biosynthesis; L-valine biosynthesis; L-valine from pyruvate: step 3/4. Functionally, functions in the biosynthesis of branched-chain amino acids. Catalyzes the dehydration of (2R,3R)-2,3-dihydroxy-3-methylpentanoate (2,3-dihydroxy-3-methylvalerate) into 2-oxo-3-methylpentanoate (2-oxo-3-methylvalerate) and of (2R)-2,3-dihydroxy-3-methylbutanoate (2,3-dihydroxyisovalerate) into 2-oxo-3-methylbutanoate (2-oxoisovalerate), the penultimate precursor to L-isoleucine and L-valine, respectively. This chain is Dihydroxy-acid dehydratase, found in Aquifex aeolicus (strain VF5).